A 413-amino-acid chain; its full sequence is Putative glutamate--cysteine ligase 2 (413 aa).

The tract at residues 392-413 is disordered; that stretch reads GGVCALSTPQGDPLPGWAERLH.

The protein belongs to the glutamate--cysteine ligase type 2 family. YbdK subfamily.

It carries out the reaction L-cysteine + L-glutamate + ATP = gamma-L-glutamyl-L-cysteine + ADP + phosphate + H(+). ATP-dependent carboxylate-amine ligase which exhibits weak glutamate--cysteine ligase activity. This is Putative glutamate--cysteine ligase 2 from Bordetella bronchiseptica (strain ATCC BAA-588 / NCTC 13252 / RB50) (Alcaligenes bronchisepticus).